A 745-amino-acid polypeptide reads, in one-letter code: 5-methyltetrahydropteroyltriglutamate--homocysteine methyltransferase (745 aa).

Residues K19 and N115 each coordinate 5-methyltetrahydropteroyltri-L-glutamate. L-homocysteine-binding positions include 420 to 422 (IGS) and E473. L-methionine is bound by residues 420 to 422 (IGS) and E473. 5-methyltetrahydropteroyltri-L-glutamate-binding positions include D478, Y501, 504-505 (RA), and W550. Position 588 (D588) interacts with L-homocysteine. D588 is an L-methionine binding site. Zn(2+)-binding residues include H630, C632, and E654. H683 acts as the Proton donor in catalysis. C715 contacts Zn(2+).

Belongs to the vitamin-B12 independent methionine synthase family. Zn(2+) serves as cofactor.

It catalyses the reaction 5-methyltetrahydropteroyltri-L-glutamate + L-homocysteine = tetrahydropteroyltri-L-glutamate + L-methionine. It participates in amino-acid biosynthesis; L-methionine biosynthesis via de novo pathway; L-methionine from L-homocysteine (MetE route): step 1/1. Catalyzes the transfer of a methyl group from 5-methyltetrahydrofolate to homocysteine resulting in methionine formation. In Streptococcus mutans serotype c (strain ATCC 700610 / UA159), this protein is 5-methyltetrahydropteroyltriglutamate--homocysteine methyltransferase.